Consider the following 83-residue polypeptide: Bowman-Birk type proteinase inhibitor C-II (83 aa).

Positions 1 to 7 are excised as a propeptide; the sequence is MELNLFK. 7 disulfides stabilise this stretch: Cys-21–Cys-75, Cys-22–Cys-37, Cys-25–Cys-71, Cys-27–Cys-35, Cys-45–Cys-52, Cys-49–Cys-64, and Cys-54–Cys-62.

It belongs to the Bowman-Birk serine protease inhibitor family.

The chain is Bowman-Birk type proteinase inhibitor C-II from Glycine max (Soybean).